The following is a 255-amino-acid chain: uncharacterized protein (255 aa).

The protein belongs to the methyltransferase superfamily.

This is an uncharacterized protein from Mycolicibacterium gilvum (strain PYR-GCK) (Mycobacterium gilvum (strain PYR-GCK)).